The primary structure comprises 323 residues: Olfactory receptor 4K5 (323 aa).

The Extracellular segment spans residues 1-25 (MDKSNSSVVSEFVLLGLCSSQKLQL). N5 is a glycosylation site (N-linked (GlcNAc...) asparagine). Residues 26–49 (FYFCFFSVLYTVIVLGNLLIILTV) traverse the membrane as a helical segment. At 50–57 (TSDTSLHS) the chain is on the cytoplasmic side. The chain crosses the membrane as a helical span at residues 58 to 79 (PMYFLLGNLSFVDICQASFATP). Residues 80 to 100 (KMIADFLSAHETISFSGCIAQ) lie on the Extracellular side of the membrane. A disulfide bridge links C97 with C189. Residues 101 to 120 (IFFIHLFTGGEMVLLVSMAY) traverse the membrane as a helical segment. Residues 121–139 (DRYVAICKPLYYVVIMSRR) are Cytoplasmic-facing. A helical membrane pass occupies residues 140-158 (TCTVLVMISWAVSLVHTLS). At 159-195 (QLSFTVNLPFCGPNVVDSFFCDLPRVTKLACLDSYII) the chain is on the extracellular side. A helical transmembrane segment spans residues 196–219 (EILIVVNSGILSLSTFSLLVSSYI). Residues 220 to 235 (IILVTVWLKSSAAMAK) are Cytoplasmic-facing. A helical transmembrane segment spans residues 236-258 (AFSTLASHIAVVILFFGPCIFIY). Topologically, residues 259 to 269 (VWPFTISPLDK) are extracellular. Residues 270-289 (FLAIFYTVFTPVLNPIIYTL) form a helical membrane-spanning segment. The Cytoplasmic segment spans residues 290-323 (RNRDMKAAVRKIVNHYLRPRRISEMSLVVRTSFH).

The protein belongs to the G-protein coupled receptor 1 family.

It is found in the cell membrane. In terms of biological role, odorant receptor. This is Olfactory receptor 4K5 (OR4K5) from Homo sapiens (Human).